Consider the following 516-residue polypeptide: Zinc finger protein 83 (516 aa).

The segment at 1–20 (MHGRKDDAQKQPVKNQLGLN) is disordered. Residues 93-115 (YKCSERGKAFHQGLHFTIHQIIH) form a C2H2-type 1; degenerate zinc finger. C2H2-type zinc fingers lie at residues 121-143 (FKCDICGKIFNKKSNLASHQRIH), 149-171 (YKCNECGKVFHNMSHLAQHRRIH), 177-199 (YKCNECGKVFNQISHLAQHQRIH), 205-227 (YKCNECGKVFHQISHLAQHRTIH), 233-255 (YECNKCGKVFSRNSYLVQHLIIH), 261-283 (YRCNVCGKVFHHISHLAQHQRIH), 289-311 (YKCNECGKVFSHKSSLVNHWRIH), 317-339 (YKCNECGKVFSHKSSLVNHWRIH), 345-367 (YKCNECGKVFSRNSYLAQHLIIH), 373-395 (YKCDECDKAFSQNSHLVQHHRIH), 401-423 (YKCDECGKVFSQNSYLAYHWRIH), 429-451 (YKCNECGKVFGLNSSLAHHRKIH), 457-479 (FKCNECGKAFSMRSSLTNHHAIH), and 485-507 (FKCNECGKLFRDNSYLVRHQRFH).

It belongs to the krueppel C2H2-type zinc-finger protein family.

The protein resides in the nucleus. Functionally, may be involved in transcriptional regulation. This Homo sapiens (Human) protein is Zinc finger protein 83 (ZNF83).